Here is a 1196-residue protein sequence, read N- to C-terminus: DNA-directed RNA polymerase subunit beta (1196 aa).

Belongs to the RNA polymerase beta chain family. As to quaternary structure, the RNAP catalytic core consists of 2 alpha, 1 beta, 1 beta' and 1 omega subunit. When a sigma factor is associated with the core the holoenzyme is formed, which can initiate transcription.

The enzyme catalyses RNA(n) + a ribonucleoside 5'-triphosphate = RNA(n+1) + diphosphate. Its function is as follows. DNA-dependent RNA polymerase catalyzes the transcription of DNA into RNA using the four ribonucleoside triphosphates as substrates. This chain is DNA-directed RNA polymerase subunit beta, found in Lactococcus lactis subsp. cremoris (strain SK11).